The following is a 637-amino-acid chain: tRNA uridine 5-carboxymethylaminomethyl modification enzyme MnmG (637 aa).

Residues 15–20 (GAGHAG), I127, and S182 contribute to the FAD site. 276–290 (GPRYCPSIEDKIVRF) is a binding site for NAD(+). Residue Q373 coordinates FAD.

It belongs to the MnmG family. Homodimer. Heterotetramer of two MnmE and two MnmG subunits. Requires FAD as cofactor.

The protein localises to the cytoplasm. Its function is as follows. NAD-binding protein involved in the addition of a carboxymethylaminomethyl (cmnm) group at the wobble position (U34) of certain tRNAs, forming tRNA-cmnm(5)s(2)U34. The polypeptide is tRNA uridine 5-carboxymethylaminomethyl modification enzyme MnmG (Streptococcus pneumoniae (strain ATCC BAA-255 / R6)).